The chain runs to 100 residues: Putative pterin-4-alpha-carbinolamine dehydratase (100 aa).

Belongs to the pterin-4-alpha-carbinolamine dehydratase family.

The enzyme catalyses (4aS,6R)-4a-hydroxy-L-erythro-5,6,7,8-tetrahydrobiopterin = (6R)-L-erythro-6,7-dihydrobiopterin + H2O. In Bradyrhizobium sp. (strain ORS 278), this protein is Putative pterin-4-alpha-carbinolamine dehydratase.